We begin with the raw amino-acid sequence, 612 residues long: UvrABC system protein C (612 aa).

Residues 20–98 (THSGVYRMLD…IKQHRPKYNI (79 aa)) enclose the GIY-YIG domain. The region spanning 208-243 (SSVLEEISAKMYQASEDMEYEKAQVYRDQLVVLRKL) is the UVR domain.

It belongs to the UvrC family. Interacts with UvrB in an incision complex.

It is found in the cytoplasm. In terms of biological role, the UvrABC repair system catalyzes the recognition and processing of DNA lesions. UvrC both incises the 5' and 3' sides of the lesion. The N-terminal half is responsible for the 3' incision and the C-terminal half is responsible for the 5' incision. The chain is UvrABC system protein C from Francisella tularensis subsp. tularensis (strain FSC 198).